A 173-amino-acid chain; its full sequence is UPF0316 protein Bsph_0745 (173 aa).

3 consecutive transmembrane segments (helical) span residues 4–24 (IVLI…RTIF), 31–51 (FLAA…LSLV), and 58–78 (MLAM…GAKI).

The protein belongs to the UPF0316 family.

The protein localises to the cell membrane. The sequence is that of UPF0316 protein Bsph_0745 from Lysinibacillus sphaericus (strain C3-41).